The primary structure comprises 197 residues: Auxin-responsive protein IAA31 (197 aa).

Disordered regions lie at residues methionine 1–lysine 43 and serine 66–glutamine 90. The EAR-like (transcriptional repression) signature appears at leucine 9–leucine 13. Residues glycine 99–glycine 186 form the PB1 domain.

It belongs to the Aux/IAA family. Homodimers and heterodimers. In terms of tissue distribution, highly expressed in etiolated seedlings. Expressed in roots.

It localises to the nucleus. In terms of biological role, aux/IAA proteins are short-lived transcriptional factors that function as repressors of early auxin response genes at low auxin concentrations. This is Auxin-responsive protein IAA31 (IAA31) from Oryza sativa subsp. japonica (Rice).